A 230-amino-acid polypeptide reads, in one-letter code: MSSLREIILDTETTGLDPRQGHRIVEIGAIEMVNKVLTGRNFHFYINPERDMPFEAYRIHGISGEFLKDKPLFHTIADDFLEFISDSKLIIHNAPFDIKFLNHELSLLKRTDIKLLELANTIDTLVMARSIFPGSKYNLDALCKRFKVDNSGRQLHGALKDAALLAEVYVELMGGRQSAFKMVDKSAVINNLATNQVNNKTEQTTIVIKPTKEELQKHKEFLSRILKTAY.

2 residues coordinate a divalent metal cation: D10 and E12. Positions 10, 12, 55, and 60 each coordinate substrate. The active-site Proton acceptor is H156. D161 contacts a divalent metal cation. D161 contacts substrate.

DNA polymerase III contains a core (composed of alpha, epsilon and theta chains) that associates with a tau subunit. This core dimerizes to form the POLIII' complex. PolIII' associates with the gamma complex (composed of gamma, delta, delta', psi and chi chains) and with the beta chain to form the complete DNA polymerase III complex. Mg(2+) serves as cofactor. Mn(2+) is required as a cofactor.

It catalyses the reaction DNA(n) + a 2'-deoxyribonucleoside 5'-triphosphate = DNA(n+1) + diphosphate. In terms of biological role, DNA polymerase III is a complex, multichain enzyme responsible for most of the replicative synthesis in bacteria. The epsilon subunit contain the editing function and is a proofreading 3'-5' exonuclease. The protein is DNA polymerase III subunit epsilon (dnaQ) of Rickettsia conorii (strain ATCC VR-613 / Malish 7).